Reading from the N-terminus, the 507-residue chain is MARLLRSATWELFPWRGYCSQKAKGELCRDFVEALKAVVGGSHVSTAAVVREQHGRDESVHRCEPPDAVVWPQNVEQVSRLAALCYRQGVPIIPFGTGTGLEGGVCAVQGGVCVNLTHMDRILELNQEDFSVVVEPGVTRKALNAHLRDSGLWFPVDPGADASLCGMAATGASGTNAVRYGTMRDNVLNLEVVLPDGRLLHTAGRGRHFRFGFWPEIPHHTAWYSPCVSLGRRKSAAGYNLTGLFVGSEGTLGLITATTLRLHPAPEATVAATCAFPSVQAAVDSTVHILQAAVPVARIEFLDEVMMDACNRYSKLNCLVAPTLFLEFHGSQQALEEQLQRTEEIVQQNGASDFSWAKEAEERSRLWTARHNAWYAALATRPGCKGYSTDVCVPISRLPEIVVQTKEDLNASGLTGSIVGHVGDGNFHCILLVNPDDAEELGRVKAFAEQLGRRALALHGTCTGEHGIGMGKRQLLQEEVGAVGVETMRQLKAVLDPQGLMNPGKVL.

The transit peptide at 1-52 directs the protein to the mitochondrion; the sequence is MARLLRSATWELFPWRGYCSQKAKGELCRDFVEALKAVVGGSHVSTAAVVRE. Lys-36 carries the post-translational modification N6-acetyllysine. The 204-residue stretch at 62–265 folds into the FAD-binding PCMH-type domain; that stretch reads RCEPPDAVVW…TATTLRLHPA (204 aa). An N6-acetyllysine modification is found at Lys-315. Lys-358 is modified (N6-acetyllysine; alternate). Lys-358 is modified (N6-succinyllysine; alternate). 2 positions are modified to N6-acetyllysine: Lys-445 and Lys-472.

This sequence belongs to the FAD-binding oxidoreductase/transferase type 4 family. Interacts with CSRP3. FAD serves as cofactor. In terms of tissue distribution, expressed moderately in heart and liver and at lower levels in skeletal muscle and kidney.

The protein localises to the mitochondrion. It catalyses the reaction (R)-lactate + 2 Fe(III)-[cytochrome c] = 2 Fe(II)-[cytochrome c] + pyruvate + 2 H(+). In terms of biological role, involved in D-lactate, but not L-lactate catabolic process. This Homo sapiens (Human) protein is Probable D-lactate dehydrogenase, mitochondrial.